The sequence spans 89 residues: Acyl carrier protein MbtL (89 aa).

One can recognise a Carrier domain in the interval 7-82; the sequence is ESVSAALTEI…DLEAAIQAKV (76 aa). Serine 42 is modified (O-(pantetheine 4'-phosphoryl)serine).

4'-phosphopantetheine is transferred from CoA to a specific serine of apo-ACP, leading to the activated holo-ACP form.

The protein resides in the cytoplasm. It functions in the pathway siderophore biosynthesis; mycobactin biosynthesis. In terms of biological role, acyl carrier protein involved in the formation of acyl-S-ACP intermediates within the mycobactin biosynthesis process. The chain is Acyl carrier protein MbtL (mbtL) from Mycobacterium sp. (strain MCS).